We begin with the raw amino-acid sequence, 545 residues long: Glucose-6-phosphate isomerase (545 aa).

Glu351 serves as the catalytic Proton donor. Residues His382 and Lys510 contribute to the active site.

This sequence belongs to the GPI family.

It localises to the cytoplasm. The enzyme catalyses alpha-D-glucose 6-phosphate = beta-D-fructose 6-phosphate. Its pathway is carbohydrate biosynthesis; gluconeogenesis. The protein operates within carbohydrate degradation; glycolysis; D-glyceraldehyde 3-phosphate and glycerone phosphate from D-glucose: step 2/4. In terms of biological role, catalyzes the reversible isomerization of glucose-6-phosphate to fructose-6-phosphate. This chain is Glucose-6-phosphate isomerase, found in Shewanella woodyi (strain ATCC 51908 / MS32).